Here is a 64-residue protein sequence, read N- to C-terminus: Large ribosomal subunit protein bL33 (64 aa).

It belongs to the bacterial ribosomal protein bL33 family.

The sequence is that of Large ribosomal subunit protein bL33 from Synechococcus sp. (strain JA-3-3Ab) (Cyanobacteria bacterium Yellowstone A-Prime).